Reading from the N-terminus, the 170-residue chain is MPTNWKDSGLRWYWVVVLVFVADQLSKQWVLSNFELYESIQLLPIFNFTYVRNYGAAFSFLSDAGGWQRWLFTFVAVGFSVVLSVWLRQQPSKMWRLNLAYTLVIGGALGNLIDRLQHGFVVDFLDFYWNTSHFPAFNIADSAICVGAALIILDSFVTGKDDKKTDGIKE.

Helical transmembrane passes span 12–32, 67–87, and 94–116; these read WYWVVVLVFVADQLSKQWVLS, WQRWLFTFVAVGFSVVLSVWL, and MWRLNLAYTLVIGGALGNLIDRL. Catalysis depends on residues Asp-123 and Asp-141. The helical transmembrane segment at 133–153 threads the bilayer; the sequence is HFPAFNIADSAICVGAALIIL.

The protein belongs to the peptidase A8 family.

It is found in the cell inner membrane. The enzyme catalyses Release of signal peptides from bacterial membrane prolipoproteins. Hydrolyzes -Xaa-Yaa-Zaa-|-(S,diacylglyceryl)Cys-, in which Xaa is hydrophobic (preferably Leu), and Yaa (Ala or Ser) and Zaa (Gly or Ala) have small, neutral side chains.. It functions in the pathway protein modification; lipoprotein biosynthesis (signal peptide cleavage). Its function is as follows. This protein specifically catalyzes the removal of signal peptides from prolipoproteins. The polypeptide is Lipoprotein signal peptidase (Shewanella halifaxensis (strain HAW-EB4)).